The sequence spans 329 residues: Delta-aminolevulinic acid dehydratase (329 aa).

K202 serves as the catalytic Schiff-base intermediate with substrate. 5-aminolevulinate contacts are provided by R212 and R223. Residue E239 participates in Mg(2+) binding. K254 serves as the catalytic Schiff-base intermediate with substrate. 5-aminolevulinate is bound by residues S280 and Y319.

This sequence belongs to the ALAD family. Homooctamer.

It carries out the reaction 2 5-aminolevulinate = porphobilinogen + 2 H2O + H(+). It participates in porphyrin-containing compound metabolism; protoporphyrin-IX biosynthesis; coproporphyrinogen-III from 5-aminolevulinate: step 1/4. Functionally, catalyzes an early step in the biosynthesis of tetrapyrroles. Binds two molecules of 5-aminolevulinate per subunit, each at a distinct site, and catalyzes their condensation to form porphobilinogen. The chain is Delta-aminolevulinic acid dehydratase (hemB) from Mycobacterium leprae (strain TN).